Reading from the N-terminus, the 921-residue chain is Protein translocase subunit SecA (921 aa).

Residues glutamine 87, 105-109 (GEGKT), and aspartate 516 each bind ATP. Positions 905, 907, 916, and 917 each coordinate Zn(2+).

Belongs to the SecA family. Monomer and homodimer. Part of the essential Sec protein translocation apparatus which comprises SecA, SecYEG and auxiliary proteins SecDF-YajC and YidC. Zn(2+) serves as cofactor.

It is found in the cell inner membrane. The protein localises to the cytoplasm. The catalysed reaction is ATP + H2O + cellular proteinSide 1 = ADP + phosphate + cellular proteinSide 2.. Functionally, part of the Sec protein translocase complex. Interacts with the SecYEG preprotein conducting channel. Has a central role in coupling the hydrolysis of ATP to the transfer of proteins into and across the cell membrane, serving both as a receptor for the preprotein-SecB complex and as an ATP-driven molecular motor driving the stepwise translocation of polypeptide chains across the membrane. The chain is Protein translocase subunit SecA from Albidiferax ferrireducens (strain ATCC BAA-621 / DSM 15236 / T118) (Rhodoferax ferrireducens).